The primary structure comprises 326 residues: uncharacterized protein (326 aa).

An ATP-binding site is contributed by 127-134 (GATGSGKS).

It belongs to the GSP E family.

This is an uncharacterized protein from Escherichia coli (strain K12).